The chain runs to 387 residues: Eukaryotic translation initiation factor 3 subunit M (387 aa).

Positions 181-340 (LSSKVMIELL…QKVHISSTMH (160 aa)) constitute a PCI domain.

The protein belongs to the eIF-3 subunit M family. In terms of assembly, component of the eukaryotic translation initiation factor 3 (eIF-3) complex. The eIF-3 complex interacts with pix.

Its subcellular location is the cytoplasm. It is found in the golgi apparatus. Component of the eukaryotic translation initiation factor 3 (eIF-3) complex, which is involved in protein synthesis of a specialized repertoire of mRNAs and, together with other initiation factors, stimulates binding of mRNA and methionyl-tRNAi to the 40S ribosome. The eIF-3 complex specifically targets and initiates translation of a subset of mRNAs involved in cell proliferation. The polypeptide is Eukaryotic translation initiation factor 3 subunit M (Drosophila sechellia (Fruit fly)).